A 380-amino-acid chain; its full sequence is 1-deoxy-D-xylulose 5-phosphate reductoisomerase (380 aa).

T9, G10, S11, V12, R36, and N117 together coordinate NADPH. K118 provides a ligand contact to 1-deoxy-D-xylulose 5-phosphate. E119 is a binding site for NADPH. D139 provides a ligand contact to Mn(2+). Residues S140, E141, S165, and H188 each contribute to the 1-deoxy-D-xylulose 5-phosphate site. Residue E141 coordinates Mn(2+). G194 provides a ligand contact to NADPH. Positions 201, 206, 207, and 210 each coordinate 1-deoxy-D-xylulose 5-phosphate. Residue E210 participates in Mn(2+) binding.

It belongs to the DXR family. Requires Mg(2+) as cofactor. It depends on Mn(2+) as a cofactor.

The catalysed reaction is 2-C-methyl-D-erythritol 4-phosphate + NADP(+) = 1-deoxy-D-xylulose 5-phosphate + NADPH + H(+). The protein operates within isoprenoid biosynthesis; isopentenyl diphosphate biosynthesis via DXP pathway; isopentenyl diphosphate from 1-deoxy-D-xylulose 5-phosphate: step 1/6. Its function is as follows. Catalyzes the NADPH-dependent rearrangement and reduction of 1-deoxy-D-xylulose-5-phosphate (DXP) to 2-C-methyl-D-erythritol 4-phosphate (MEP). The chain is 1-deoxy-D-xylulose 5-phosphate reductoisomerase from Aquifex aeolicus (strain VF5).